A 152-amino-acid polypeptide reads, in one-letter code: tRNA-specific adenosine deaminase (152 aa).

Positions 2 to 111 (AERTHFMELA…AQDPKGGAVE (110 aa)) constitute a CMP/dCMP-type deaminase domain. Histidine 53 provides a ligand contact to Zn(2+). Glutamate 55 (proton donor) is an active-site residue. 2 residues coordinate Zn(2+): cysteine 83 and cysteine 86.

The protein belongs to the cytidine and deoxycytidylate deaminase family. In terms of assembly, homodimer. Requires Zn(2+) as cofactor.

The catalysed reaction is adenosine(34) in tRNA + H2O + H(+) = inosine(34) in tRNA + NH4(+). Functionally, catalyzes the deamination of adenosine to inosine at the wobble position 34 of tRNA(Arg2). The protein is tRNA-specific adenosine deaminase of Agrobacterium fabrum (strain C58 / ATCC 33970) (Agrobacterium tumefaciens (strain C58)).